The following is a 143-amino-acid chain: Cofilin (143 aa).

In terms of domain architecture, ADF-H spans 5 to 137 (GVAVADESLN…AYESVLEKVS (133 aa)).

Belongs to the actin-binding proteins ADF family.

It localises to the cytoplasm. The protein localises to the cytoskeleton. It is found in the nucleus matrix. Functionally, controls reversibly actin polymerization and depolymerization in a pH-sensitive manner. It has the ability to bind G- and F-actin in a 1:1 ratio of cofilin to actin. Binding to F-actin is regulated by tropomyosin. It is the major component of intranuclear and cytoplasmic actin rods. Required for accumulation of actin at the cell division site via depolymerizing actin at the cell ends. In association with myosin II has a role in the assembly of the contractile ring via severing actin filaments. Involved in the maintenance of the contractile ring once formed. In association with profilin and capping protein, has a role in the mitotic reorganization of the actin cytoskeleton. The polypeptide is Cofilin (COF1) (Kluyveromyces lactis (strain ATCC 8585 / CBS 2359 / DSM 70799 / NBRC 1267 / NRRL Y-1140 / WM37) (Yeast)).